A 637-amino-acid chain; its full sequence is Threonine--tRNA ligase (637 aa).

A TGS domain is found at 1-61 (MPNVKLPDGN…KEDCSLIIVT (61 aa)). Residues 242–533 (DHRKLGKALD…LIEHYAGKLP (292 aa)) form a catalytic region. Zn(2+) is bound by residues cysteine 333, histidine 384, and histidine 510.

The protein belongs to the class-II aminoacyl-tRNA synthetase family. In terms of assembly, homodimer. It depends on Zn(2+) as a cofactor.

It localises to the cytoplasm. The catalysed reaction is tRNA(Thr) + L-threonine + ATP = L-threonyl-tRNA(Thr) + AMP + diphosphate + H(+). Catalyzes the attachment of threonine to tRNA(Thr) in a two-step reaction: L-threonine is first activated by ATP to form Thr-AMP and then transferred to the acceptor end of tRNA(Thr). Also edits incorrectly charged L-seryl-tRNA(Thr). This Legionella pneumophila (strain Corby) protein is Threonine--tRNA ligase.